Here is a 249-residue protein sequence, read N- to C-terminus: FMN reductase [NAD(P)H] (249 aa).

FMN-binding positions include H11–R15, Q67, P134–G136, and K173–R175.

This sequence belongs to the flavin oxidoreductase frp family. Homodimer.

It catalyses the reaction FMNH2 + NADP(+) = FMN + NADPH + 2 H(+). The catalysed reaction is FMNH2 + NAD(+) = FMN + NADH + 2 H(+). Its activity is regulated as follows. FMN is a competitive inhibitor of NADH, and therefore leads to the preferential utilization of NADPH. In terms of biological role, reduces FMNH(2) to FMN, with NADH or NADPH as reductant. It also reduces nitroaromatic compounds, quinones, chromates and azo dyes. It could supply the reduced form of FMN to luciferase-like protein and contribute to the degradation of aromatic compounds. This is FMN reductase [NAD(P)H] (nfrA2) from Bacillus subtilis (strain 168).